A 387-amino-acid chain; its full sequence is Succinate--CoA ligase [ADP-forming] subunit beta (387 aa).

An ATP-grasp domain is found at 9 to 236 (KELFAKHNVP…KDATDPLELK (228 aa)). Residues lysine 45, 52–54 (GRG), serine 94, and glutamate 99 contribute to the ATP site. Residues asparagine 191 and aspartate 205 each coordinate Mg(2+). Substrate-binding positions include asparagine 256 and 318 to 320 (GIT).

Belongs to the succinate/malate CoA ligase beta subunit family. Heterotetramer of two alpha and two beta subunits. Mg(2+) serves as cofactor.

It carries out the reaction succinate + ATP + CoA = succinyl-CoA + ADP + phosphate. It catalyses the reaction GTP + succinate + CoA = succinyl-CoA + GDP + phosphate. The protein operates within carbohydrate metabolism; tricarboxylic acid cycle; succinate from succinyl-CoA (ligase route): step 1/1. Succinyl-CoA synthetase functions in the citric acid cycle (TCA), coupling the hydrolysis of succinyl-CoA to the synthesis of either ATP or GTP and thus represents the only step of substrate-level phosphorylation in the TCA. The beta subunit provides nucleotide specificity of the enzyme and binds the substrate succinate, while the binding sites for coenzyme A and phosphate are found in the alpha subunit. This Mycolicibacterium vanbaalenii (strain DSM 7251 / JCM 13017 / BCRC 16820 / KCTC 9966 / NRRL B-24157 / PYR-1) (Mycobacterium vanbaalenii) protein is Succinate--CoA ligase [ADP-forming] subunit beta.